The following is a 69-amino-acid chain: U2-agatoxin-Ao1z (69 aa).

The signal sequence occupies residues 1–20 (MRAIISLLLISAMVFSMIEA). The propeptide occupies 21–34 (VPVEEGLQLFEGER). 3 disulfide bridges follow: C37–C53, C44–C58, and C52–C68.

The protein belongs to the neurotoxin 01 (U2-agtx) family. As to expression, expressed by the venom gland.

The protein resides in the secreted. In terms of biological role, insect active toxin causing rapid but reversible paralysis in crickets. No activity shown in mammals. Does not show effect on mammalian voltage-gated calcium channels. In Agelena orientalis (Funnel-web spider), this protein is U2-agatoxin-Ao1z.